A 157-amino-acid chain; its full sequence is MTNGNGTPPEGAPPQLNVLAQYTKDLSFENPNAPASLAPQQQQPAINIQINVGANNVGENEYEVTLSIEGKAESGSSVLFSFELAYAGVFRVLNVPQENLHPLIMIECPRLLFPFAREIIASAVRDGGFPPLMLDPVDFIGLYRQNLERAQQQGQPS.

It belongs to the SecB family. In terms of assembly, homotetramer, a dimer of dimers. One homotetramer interacts with 1 SecA dimer.

Its subcellular location is the cytoplasm. Its function is as follows. One of the proteins required for the normal export of preproteins out of the cell cytoplasm. It is a molecular chaperone that binds to a subset of precursor proteins, maintaining them in a translocation-competent state. It also specifically binds to its receptor SecA. This Rhodopseudomonas palustris (strain TIE-1) protein is Protein-export protein SecB.